The sequence spans 324 residues: Virulence-associated V antigen (324 aa).

It localises to the secreted. In terms of biological role, possibly involved in calcium regulation of YOP expression, which includes the export process. The polypeptide is Virulence-associated V antigen (lcrV) (Yersinia pestis (strain Pestoides F)).